The chain runs to 121 residues: Surface glycoprotein CD59 homolog (121 aa).

The first 19 residues, 1–19 (MYILFTLVLTFVFCKPIHS), serve as a signal peptide directing secretion. Residues 20 to 104 (LQCYNCSHST…ENIKRTISDK (85 aa)) form the UPAR/Ly6 domain. 5 disulfide bridges follow: cysteine 22-cysteine 45, cysteine 25-cysteine 32, cysteine 38-cysteine 58, cysteine 64-cysteine 82, and cysteine 83-cysteine 88. N-linked (GlcNAc...) asparagine; by host glycosylation is present at asparagine 24. The GPI-anchor amidated asparagine; by host moiety is linked to residue asparagine 96. A propeptide spans 97–121 (IKRTISDKALLLLALFLVTAWNFPL) (removed in mature form).

It localises to the host cell membrane. The polypeptide is Surface glycoprotein CD59 homolog (15) (Saimiriine herpesvirus 2 (strain 11) (SaHV-2)).